Consider the following 426-residue polypeptide: Pannexin-1 (426 aa).

Residues Met-1–Cys-40 are Cytoplasmic-facing. Cys-40 bears the S-nitrosocysteine mark. The helical transmembrane segment at Ile-41–Gly-61 threads the bilayer. At Thr-62–His-106 the chain is on the extracellular side. Disulfide bonds link Cys-66–Cys-264 and Cys-84–Cys-245. The chain crosses the membrane as a helical span at residues Lys-107–Trp-127. The Cytoplasmic portion of the chain corresponds to Arg-128–Arg-216. Tyr-198 carries the post-translational modification Phosphotyrosine. A helical transmembrane segment spans residues Leu-217–Ser-237. At Ser-238–Leu-277 the chain is on the extracellular side. A glycan (N-linked (GlcNAc...) asparagine) is linked at Asn-254. A helical transmembrane segment spans residues Ile-278–Phe-298. At Arg-299 to Cys-426 the chain is on the cytoplasmic side. Position 346 is an S-nitrosocysteine (Cys-346). The interval Glu-407–Cys-426 is disordered.

It belongs to the pannexin family. In terms of assembly, homoheptameric. In terms of processing, S-nitrosylation inhibits channel currents and ATP release. Post-translationally, N-glycosylation plays a role in cell surface targeting. Glycosylation at its extracellular surface makes unlikely that two oligomers could dock to form an intercellular channel such as in gap junctions. Exists in three glycosylation states: non-glycosylated (GLY0), high-mannose glycosylated (GLY1), and fully mature glycosylated (GLY2). Cleaved by CASP3 and CASP7 during apoptosis. Cleavage opens the channel for the release of metabolites and induces plasma membrane permeability during apoptosis. In terms of processing, phosphorylated at Tyr-198 by SRC. Phosphorylation activates ATP release. Constitutively phosphorylated in vascular smooth muscle cells. As to expression, expressed in the eye, thyroid, prostate, kidney and liver. Abundantly expressed in the CNS, including hippocampus, olfactory bulb, cortex, cerebellum and white matter.

Its subcellular location is the cell membrane. It localises to the endoplasmic reticulum membrane. The enzyme catalyses Ca(2+)(in) = Ca(2+)(out). The catalysed reaction is ATP(in) = ATP(out). It carries out the reaction K(+)(in) = K(+)(out). It catalyses the reaction chloride(in) = chloride(out). The enzyme catalyses iodide(out) = iodide(in). The catalysed reaction is Na(+)(in) = Na(+)(out). It carries out the reaction nitrate(in) = nitrate(out). It catalyses the reaction L-aspartate(out) = L-aspartate(in). The enzyme catalyses L-glutamate(out) = L-glutamate(in). The catalysed reaction is D-gluconate(in) = D-gluconate(out). It carries out the reaction spermidine(in) = spermidine(out). Ion channel involved in a variety of physiological functions such as blood pressure regulation, apoptotic cell clearance and oogenesis. Forms anion-selective channels with relatively low conductance and an order of permeabilities: nitrate&gt;iodide&gt;chlroride&gt;&gt;aspartate=glutamate=gluconate. Can release ATP upon activation through phosphorylation or cleavage at C-terminus. May play a role as a Ca(2+)-leak channel to regulate ER Ca(2+) homeostasis. Its function is as follows. During apoptosis, the C terminal tail is cleaved by caspases, which opens the main pore acting as a large-pore ATP efflux channel with a broad distribution, which allows the regulated release of molecules and ions smaller than 1 kDa, such as nucleotides ATP and UTP, and selective plasma membrane permeability to attract phagocytes that engulf the dying cells. The chain is Pannexin-1 (Panx1) from Rattus norvegicus (Rat).